A 409-amino-acid chain; its full sequence is Elongation factor Tu, cyanelle (409 aa).

One can recognise a tr-type G domain in the interval 10–214 (KPHVNIGTIG…AVDEYIPTPE (205 aa)). The segment at 19 to 26 (GHVDHGKT) is G1. 19 to 26 (GHVDHGKT) contributes to the GTP binding site. T26 contacts Mg(2+). The interval 60-64 (GITIN) is G2. The interval 81–84 (DCPG) is G3. GTP contacts are provided by residues 81-85 (DCPGH) and 136-139 (NKED). Positions 136–139 (NKED) are G4. The segment at 174–176 (SAL) is G5.

This sequence belongs to the TRAFAC class translation factor GTPase superfamily. Classic translation factor GTPase family. EF-Tu/EF-1A subfamily.

The protein localises to the plastid. Its subcellular location is the cyanelle. It catalyses the reaction GTP + H2O = GDP + phosphate + H(+). GTP hydrolase that promotes the GTP-dependent binding of aminoacyl-tRNA to the A-site of ribosomes during protein biosynthesis. This Cyanophora paradoxa protein is Elongation factor Tu, cyanelle (tufA).